The following is a 347-amino-acid chain: Spermidine/putrescine import ATP-binding protein PotA (347 aa).

One can recognise an ABC transporter domain in the interval 6-236 (IEIKNVYKEF…PKNAFVAKFI (231 aa)). An ATP-binding site is contributed by 38-45 (GPSGCGKT).

The protein belongs to the ABC transporter superfamily. Spermidine/putrescine importer (TC 3.A.1.11.1) family. As to quaternary structure, the complex is composed of two ATP-binding proteins (PotA), two transmembrane proteins (PotB and PotC) and a solute-binding protein (PotD).

The protein resides in the cell membrane. The catalysed reaction is ATP + H2O + polyamine-[polyamine-binding protein]Side 1 = ADP + phosphate + polyamineSide 2 + [polyamine-binding protein]Side 1.. Functionally, part of the ABC transporter complex PotABCD involved in spermidine/putrescine import. Responsible for energy coupling to the transport system. This chain is Spermidine/putrescine import ATP-binding protein PotA, found in Clostridium novyi (strain NT).